A 156-amino-acid chain; its full sequence is Small ribosomal subunit protein uS7 (156 aa).

The protein belongs to the universal ribosomal protein uS7 family. As to quaternary structure, part of the 30S ribosomal subunit. Contacts proteins S9 and S11.

In terms of biological role, one of the primary rRNA binding proteins, it binds directly to 16S rRNA where it nucleates assembly of the head domain of the 30S subunit. Is located at the subunit interface close to the decoding center, probably blocks exit of the E-site tRNA. The chain is Small ribosomal subunit protein uS7 from Bacillus cereus (strain ZK / E33L).